Reading from the N-terminus, the 187-residue chain is UPF0340 protein SGO_0411 (187 aa).

It belongs to the UPF0340 family.

This chain is UPF0340 protein SGO_0411, found in Streptococcus gordonii (strain Challis / ATCC 35105 / BCRC 15272 / CH1 / DL1 / V288).